A 429-amino-acid polypeptide reads, in one-letter code: Citrate synthase (429 aa).

Active-site residues include histidine 306 and aspartate 364.

This sequence belongs to the citrate synthase family.

The catalysed reaction is oxaloacetate + acetyl-CoA + H2O = citrate + CoA + H(+). It functions in the pathway carbohydrate metabolism; tricarboxylic acid cycle; isocitrate from oxaloacetate: step 1/2. This chain is Citrate synthase (gltA), found in Rhizobium meliloti (strain 1021) (Ensifer meliloti).